A 37-amino-acid chain; its full sequence is Large ribosomal subunit protein bL36c (37 aa).

The protein belongs to the bacterial ribosomal protein bL36 family.

The protein localises to the plastid. It localises to the chloroplast. In Thalassiosira pseudonana (Marine diatom), this protein is Large ribosomal subunit protein bL36c.